A 340-amino-acid polypeptide reads, in one-letter code: tRNA N6-adenosine threonylcarbamoyltransferase (340 aa).

His-111 and His-115 together coordinate Fe cation. Residues 133–137 (VVSGG), Asp-166, Gly-179, Asp-183, and Asn-272 contribute to the substrate site. Position 300 (Asp-300) interacts with Fe cation.

Belongs to the KAE1 / TsaD family. The cofactor is Fe(2+).

The protein resides in the cytoplasm. The catalysed reaction is L-threonylcarbamoyladenylate + adenosine(37) in tRNA = N(6)-L-threonylcarbamoyladenosine(37) in tRNA + AMP + H(+). Required for the formation of a threonylcarbamoyl group on adenosine at position 37 (t(6)A37) in tRNAs that read codons beginning with adenine. Is involved in the transfer of the threonylcarbamoyl moiety of threonylcarbamoyl-AMP (TC-AMP) to the N6 group of A37, together with TsaE and TsaB. TsaD likely plays a direct catalytic role in this reaction. This Geobacter sulfurreducens (strain ATCC 51573 / DSM 12127 / PCA) protein is tRNA N6-adenosine threonylcarbamoyltransferase.